The sequence spans 200 residues: Peptidyl-tRNA hydrolase (200 aa).

Tyr17 is a binding site for tRNA. His22 (proton acceptor) is an active-site residue. Residues Tyr78, Asn80, and Asn126 each contribute to the tRNA site.

The protein belongs to the PTH family. In terms of assembly, monomer.

It localises to the cytoplasm. It carries out the reaction an N-acyl-L-alpha-aminoacyl-tRNA + H2O = an N-acyl-L-amino acid + a tRNA + H(+). Hydrolyzes ribosome-free peptidyl-tRNAs (with 1 or more amino acids incorporated), which drop off the ribosome during protein synthesis, or as a result of ribosome stalling. Its function is as follows. Catalyzes the release of premature peptidyl moieties from peptidyl-tRNA molecules trapped in stalled 50S ribosomal subunits, and thus maintains levels of free tRNAs and 50S ribosomes. The polypeptide is Peptidyl-tRNA hydrolase (Cutibacterium acnes (strain DSM 16379 / KPA171202) (Propionibacterium acnes)).